The sequence spans 430 residues: Probable dual-specificity RNA methyltransferase RlmN (430 aa).

Glu-125 functions as the Proton acceptor in the catalytic mechanism. In terms of domain architecture, Radical SAM core spans 152 to 395; sequence RHGRVTLCVS…VTVRDTRGRE (244 aa). An intrachain disulfide couples Cys-159 to Cys-400. The [4Fe-4S] cluster site is built by Cys-166, Cys-170, and Cys-173. Residues 221-222, Ser-255, 278-280, and Asn-357 contribute to the S-adenosyl-L-methionine site; these read GE and SLH. Residue Cys-400 is the S-methylcysteine intermediate of the active site.

Belongs to the radical SAM superfamily. RlmN family. Requires [4Fe-4S] cluster as cofactor.

It localises to the cytoplasm. It carries out the reaction adenosine(2503) in 23S rRNA + 2 reduced [2Fe-2S]-[ferredoxin] + 2 S-adenosyl-L-methionine = 2-methyladenosine(2503) in 23S rRNA + 5'-deoxyadenosine + L-methionine + 2 oxidized [2Fe-2S]-[ferredoxin] + S-adenosyl-L-homocysteine. It catalyses the reaction adenosine(37) in tRNA + 2 reduced [2Fe-2S]-[ferredoxin] + 2 S-adenosyl-L-methionine = 2-methyladenosine(37) in tRNA + 5'-deoxyadenosine + L-methionine + 2 oxidized [2Fe-2S]-[ferredoxin] + S-adenosyl-L-homocysteine. In terms of biological role, specifically methylates position 2 of adenine 2503 in 23S rRNA and position 2 of adenine 37 in tRNAs. This chain is Probable dual-specificity RNA methyltransferase RlmN, found in Acidothermus cellulolyticus (strain ATCC 43068 / DSM 8971 / 11B).